Reading from the N-terminus, the 94-residue chain is U1-theraphotoxin-Sp1a (94 aa).

Positions 1-22 are cleaved as a signal peptide; that stretch reads MIFLLPSIISVMLLAEPVLMLG. A propeptide spanning residues 23 to 58 is cleaved from the precursor; that stretch reads DTEDADLMEMVQLSRPFFNPIIRAVELVELREERQR. Disulfide bonds link Cys-60–Cys-78, Cys-67–Cys-83, and Cys-77–Cys-88. Valine amide is present on Val-92.

It belongs to the neurotoxin 14 (magi-1) family. OAIP-1 subfamily. Expressed by the venom gland.

It localises to the secreted. Probable ion channel inhibitor. Shows insecticidal activity. Acts synergistically with the neonicotinoid insecticide imidacloprid. Is neither a repellent that repels insects nor an attractant that is preferentially consumed by insects. Is very stable. The protein is U1-theraphotoxin-Sp1a of Selenotypus plumipes (Australian featherleg tarantula).